We begin with the raw amino-acid sequence, 165 residues long: Neurotrophin-3 (165 aa).

The first 3 residues, 1–3 (IQS), serve as a signal peptide directing secretion. A propeptide spanning residues 4-119 (TSMDQGSLSE…VLNRTSRRKR (116 aa)) is cleaved from the precursor. An N-linked (GlcNAc...) asparagine glycan is attached at asparagine 112.

This sequence belongs to the NGF-beta family.

It is found in the secreted. Its function is as follows. Seems to promote the survival of visceral and proprioceptive sensory neurons. In Anilius scytale (Coral cylinder snake), this protein is Neurotrophin-3 (NTF3).